We begin with the raw amino-acid sequence, 192 residues long: MEYRSLTLDDFLSRFQLLRPQINREPLNHRQAAVLIPIVRRPQPGLLLTQRSIHLRKHAGQVAFPGGAVDDTDASVIAAALREAEEEVAIPPSAVEVIGVLPPVDSVTGYQVTPVVGIIPPDLPYRASEDEVSAVFEMPLAQALHLGRYHPLDIYRRGDSHRVWLSWYEQYFVWGMTAGIIRELALQIGVTP.

One can recognise a Nudix hydrolase domain in the interval 29–160; the sequence is HRQAAVLIPI…PLDIYRRGDS (132 aa). Positions 67–89 match the Nudix box motif; sequence GAVDDTDASVIAAALREAEEEVA. Residues Glu-83 and Glu-87 each coordinate Mg(2+).

The protein belongs to the Nudix hydrolase family. PCD1 subfamily. The cofactor is Mn(2+). Mg(2+) is required as a cofactor.

In terms of biological role, probably mediates the hydrolysis of some nucleoside diphosphate derivatives. This is an uncharacterized protein from Shigella flexneri.